The sequence spans 340 residues: 3-isopropylmalate dehydrogenase (340 aa).

Substrate-binding residues include Arg-88, Arg-98, Arg-122, and Asp-212. 3 residues coordinate Mg(2+): Asp-212, Asp-236, and Asp-240. Residue 272–284 (GSAPDIAGQGIAD) coordinates NAD(+).

This sequence belongs to the isocitrate and isopropylmalate dehydrogenases family. LeuB type 2 subfamily. As to quaternary structure, homodimer. It depends on Mg(2+) as a cofactor. Mn(2+) serves as cofactor.

The protein resides in the cytoplasm. The enzyme catalyses (2R,3S)-3-isopropylmalate + NAD(+) = 4-methyl-2-oxopentanoate + CO2 + NADH. Its pathway is amino-acid biosynthesis; L-leucine biosynthesis; L-leucine from 3-methyl-2-oxobutanoate: step 3/4. Functionally, catalyzes the oxidation of 3-carboxy-2-hydroxy-4-methylpentanoate (3-isopropylmalate) to 3-carboxy-4-methyl-2-oxopentanoate. The product decarboxylates to 4-methyl-2 oxopentanoate. The sequence is that of 3-isopropylmalate dehydrogenase from Corynebacterium glutamicum (strain R).